Reading from the N-terminus, the 321-residue chain is Oxidoreductase P35 (321 aa).

The protein belongs to the Gfo/Idh/MocA family.

The protein resides in the cell surface. Oxidoreductase that may be involved in ulvan degradation. Ulvan is the main polysaccharide component of the Ulvales (green seaweed) cell wall. It is composed of disaccharide building blocks comprising 3-sulfated rhamnose (Rha3S) linked to D-glucuronic acid (GlcA), L-iduronic acid (IduA), or D-xylose (Xyl). The chain is Oxidoreductase P35 from Formosa agariphila (strain DSM 15362 / KCTC 12365 / LMG 23005 / KMM 3901 / M-2Alg 35-1).